Here is a 264-residue protein sequence, read N- to C-terminus: Proteasome assembly chaperone 2 (264 aa).

Threonine 137 is subject to Phosphothreonine.

This sequence belongs to the PSMG2 family. As to quaternary structure, forms a heterodimer with PSMG1. The PSMG1-PSMG2 heterodimer interacts directly with the PSMA5 and PSMA7 proteasome alpha subunits. Degraded by the proteasome upon completion of 20S proteasome maturation.

The protein resides in the nucleus. Functionally, chaperone protein which promotes assembly of the 20S proteasome as part of a heterodimer with PSMG1. The PSMG1-PSMG2 heterodimer binds to the PSMA5 and PSMA7 proteasome subunits, promotes assembly of the proteasome alpha subunits into the heteroheptameric alpha ring and prevents alpha ring dimerization. In Mus musculus (Mouse), this protein is Proteasome assembly chaperone 2.